The following is a 240-amino-acid chain: Chloroplastic group IIB intron splicing facilitator CRS2-B, chloroplastic (240 aa).

This sequence belongs to the PTH family. CRS2 subfamily. As to quaternary structure, part of large ribonucleo-protein complexes that include group IIB introns and either CAF1 or CAF2.

It localises to the plastid. The protein resides in the chloroplast stroma. In terms of biological role, required for the splicing of group IIB introns in chloroplasts. The sequence is that of Chloroplastic group IIB intron splicing facilitator CRS2-B, chloroplastic (CRS2B) from Arabidopsis thaliana (Mouse-ear cress).